The primary structure comprises 691 residues: Methionine--tRNA ligase (691 aa).

A 'HIGH' region motif is present at residues 12 to 22 (PYANGSFHIGH). Residues Cys-143, Cys-146, Cys-156, and Cys-159 each contribute to the Zn(2+) site. A 'KMSKS' region motif is present at residues 341-345 (KMSKS). An ATP-binding site is contributed by Lys-344. One can recognise a tRNA-binding domain in the interval 585–691 (DFVKVDLRIA…PGAQPGMRIH (107 aa)).

This sequence belongs to the class-I aminoacyl-tRNA synthetase family. MetG type 1 subfamily. Homodimer. Zn(2+) serves as cofactor.

The protein resides in the cytoplasm. It carries out the reaction tRNA(Met) + L-methionine + ATP = L-methionyl-tRNA(Met) + AMP + diphosphate. Functionally, is required not only for elongation of protein synthesis but also for the initiation of all mRNA translation through initiator tRNA(fMet) aminoacylation. The polypeptide is Methionine--tRNA ligase (Bordetella avium (strain 197N)).